A 101-amino-acid polypeptide reads, in one-letter code: Urease subunit beta (101 aa).

This sequence belongs to the urease beta subunit family. As to quaternary structure, heterotrimer of UreA (gamma), UreB (beta) and UreC (alpha) subunits. Three heterotrimers associate to form the active enzyme.

The protein resides in the cytoplasm. The catalysed reaction is urea + 2 H2O + H(+) = hydrogencarbonate + 2 NH4(+). It functions in the pathway nitrogen metabolism; urea degradation; CO(2) and NH(3) from urea (urease route): step 1/1. The sequence is that of Urease subunit beta from Cupriavidus pinatubonensis (strain JMP 134 / LMG 1197) (Cupriavidus necator (strain JMP 134)).